Here is a 230-residue protein sequence, read N- to C-terminus: MKIEAITGSEAEAFHRMGSQASHRYDEFVDLLVGAGIADGQTVVDLCCGSGELEVILSSRFPSLNLVGVDLSEDMVRIAREYAAEQGKALEFRHGDAQLLAGMEDLAGKADLVVSRNAFHRLTRLPAAFDTMLRLAKPGGAVLNCSFIHPSDFDESGFRAWVTFLNQRPWDSEMQIVWALAHHYAPRLDDYREALAQAARETPVSEQRVWIDDQGYGVPTVKCFARRAAA.

It belongs to the methyltransferase superfamily.

It catalyses the reaction 8-desmethylnovobiocic acid + S-adenosyl-L-methionine = novobiocic acid + S-adenosyl-L-homocysteine + H(+). Its pathway is antibiotic biosynthesis; novobiocin biosynthesis. In terms of biological role, C-methyltransferase that methylates 8-demethylnovobiocic acid to produce novobiocic acid in the novobiocin biosynthesis pathway. Novobiocin is an aminocoumarin family antibiotic that targets bacterial DNA gyrases. The polypeptide is 8-demethylnovobiocic acid C(8)-methyltransferase (novO) (Streptomyces niveus (Streptomyces spheroides)).